An 86-amino-acid polypeptide reads, in one-letter code: Putative membrane protein insertion efficiency factor (86 aa).

Belongs to the UPF0161 family.

It is found in the cell inner membrane. Its function is as follows. Could be involved in insertion of integral membrane proteins into the membrane. This is Putative membrane protein insertion efficiency factor from Pseudomonas aeruginosa (strain LESB58).